A 480-amino-acid chain; its full sequence is Gamma-aminobutyric acid receptor subunit rho-1 (480 aa).

The first 21 residues, 1-21 (MLAVQNMKFGIFLLWWGWVLA), serve as a signal peptide directing secretion. Topologically, residues 22–281 (AESTAHWPGR…LYINFTLRRH (260 aa)) are extracellular. The span at 29 to 38 (PGREVHEPSR) shows a compositional bias: basic and acidic residues. The disordered stretch occupies residues 29 to 67 (PGREVHEPSRKGSRPQRQRRGAHDDAHKQGSPILRRSSD). A compositionally biased stretch (basic residues) spans 39 to 48 (KGSRPQRQRR). 4-aminobutanoate is bound at residue Arg126. N-linked (GlcNAc...) asparagine glycosylation occurs at Asn141. Ser190 is a 4-aminobutanoate binding site. The cysteines at positions 199 and 213 are disulfide-linked. Glu218 provides a ligand contact to 4-aminobutanoate. N-linked (GlcNAc...) asparagine glycans are attached at residues Asn235 and Asn275. Residues 282–302 (IFFFLLQTYFPATLMVMLSWV) form a helical membrane-spanning segment. Topologically, residues 303–314 (SFWIDRRAVPAR) are cytoplasmic. The helical transmembrane segment at 315 to 335 (VPLGITTVLTMSTIITGVNAS) threads the bilayer. Topologically, residues 336 to 346 (MPRVSYIKAVD) are extracellular. A helical transmembrane segment spans residues 347–367 (IYLWVSFVFVFLSVLEYAAVN). At 368–458 (YLTTVQERKE…MRINTHAIDK (91 aa)) the chain is on the cytoplasmic side. A helical membrane pass occupies residues 459 to 479 (YSRIIFPAAYILFNLIYWSIF). Position 480 (Ser480) is a topological domain, extracellular.

Belongs to the ligand-gated ion channel (TC 1.A.9) family. Gamma-aminobutyric acid receptor (TC 1.A.9.5) subfamily. GABRR1 sub-subfamily. Three rho subunits (rho-1/GBRR1, rho-2/GBRR2 and rho-3/GBRR3) coassemble either to form functional homopentamers or heteropentamers. Rho-1/GBRR1 subunits can also associate with alpha-1/GBRA1 subunits to form a functional GABAAR. Interacts with SQSTM1. As to expression, expressed in the cerebellum.

It is found in the postsynaptic cell membrane. The protein resides in the cell membrane. The catalysed reaction is chloride(in) = chloride(out). Inhibited by TPMPA, a rho-specific antagonist, when forming a homopentamer. In contrast with other GABAARs, rho-1 GABAAR is not inhibited by bicuculline when forming a homopentamer. In terms of biological role, rho subunit of the pentameric ligand-gated chloride channels responsible for mediating the effects of gamma-aminobutyric acid (GABA), the major inhibitory neurotransmitter in the brain. Rho-containing GABA-gated chloride channels are a subclass of GABA(A) receptors (GABAARs) entirely composed of rho subunits, where GABA molecules bind at the rho intersubunit interfaces. When activated by GABA, rho-GABAARs selectively allow the flow of chloride anions across the cell membrane down their electrochemical gradient. Rho-1 subunits are primarily expressed in retina where rho-1-containing GABAARs play a role in retinal neurotransmission. Rho-1 GABAARs are also involved in neuronal tonic (extrasynaptic) and phasic (synaptic) transmission in the Purkinje neurons of the cerebellum. Rho-1 GABAARs may also contribute to the regulation of glial development in the cerebellum by controlling extrasynaptic transmission. The protein is Gamma-aminobutyric acid receptor subunit rho-1 of Mus musculus (Mouse).